The primary structure comprises 372 residues: Peptidyl-prolyl cis-trans isomerase D (372 aa).

The 165-residue stretch at 14–178 folds into the PPIase cyclophilin-type domain; that stretch reads YFDISIGGKS…KEALIVDCGE (165 aa). 3 TPR repeats span residues 219-252, 271-304, and 309-342; these read AKAS…INEE, FSLN…GGVK, and AKAF…APND.

This sequence belongs to the cyclophilin-type PPIase family. PPIase D subfamily.

It localises to the cytoplasm. It catalyses the reaction [protein]-peptidylproline (omega=180) = [protein]-peptidylproline (omega=0). Its function is as follows. PPIases accelerate the folding of proteins. It catalyzes the cis-trans isomerization of proline imidic peptide bonds in oligopeptides. The chain is Peptidyl-prolyl cis-trans isomerase D (CPR6) from Gibberella zeae (strain ATCC MYA-4620 / CBS 123657 / FGSC 9075 / NRRL 31084 / PH-1) (Wheat head blight fungus).